We begin with the raw amino-acid sequence, 207 residues long: Claudin-11 (207 aa).

Position 1 (methionine 1) is a topological domain, cytoplasmic. Residues 2–22 (VATCLQVVGFVTSFVGWIGII) traverse the membrane as a helical segment. Residues 23–82 (VTTSTNDWVVTCGYTIPTCRKLDELGSKGLWADCVMATGLYHCKPLVDILILPGYVQACR) lie on the Extracellular side of the membrane. Residues 83-103 (ALMIAASVLGLPAILLLLTVL) form a helical membrane-spanning segment. Over 104 to 122 (PCIRMGHEPGVAKYRRAQL) the chain is Cytoplasmic. Residues 123 to 143 (AGVMLVLVALCAMVATIWFPV) traverse the membrane as a helical segment. Residues 144 to 157 (CAHRETTIVSFGYS) are Extracellular-facing. A helical membrane pass occupies residues 158–178 (LYAGWIGAVLCLVGGCVIVCC). Over 179–207 (AGDAQAFGENRFYYSSGSSSPTHAKSAHV) the chain is Cytoplasmic. 4 positions are modified to phosphoserine: serine 193, serine 194, serine 197, and serine 198.

It belongs to the claudin family. Interacts with tetraspanin-3/TSPAN3. Interacts with OCLN.

The protein localises to the cell junction. It is found in the tight junction. Its subcellular location is the cell membrane. Its function is as follows. Plays a major role in tight junction-specific obliteration of the intercellular space, through calcium-independent cell-adhesion activity. In Bos taurus (Bovine), this protein is Claudin-11 (CLDN11).